The primary structure comprises 159 residues: MDIRTGNGFDVHAFGPGDHVWLCGVRVPHHRGLIGHSDADVGMHALTDAIYGALAEGDIGVHFPPSDPQWKGAASRIFLEHAMGRIAARGYTLANCDVTLICERPKIGPVAPAMREALAEIMGIAADRISVKATTSEKLGFTGREEGIAAIATVALLQA.

A divalent metal cation-binding residues include Asp10 and His12. Residues 10-12 (DVH) and 36-37 (HS) each bind 4-CDP-2-C-methyl-D-erythritol 2-phosphate. Position 44 (His44) interacts with a divalent metal cation. 4-CDP-2-C-methyl-D-erythritol 2-phosphate contacts are provided by residues 58 to 60 (DIG), 134 to 137 (TTSE), Phe141, and Arg144.

Belongs to the IspF family. In terms of assembly, homotrimer. The cofactor is a divalent metal cation.

It catalyses the reaction 4-CDP-2-C-methyl-D-erythritol 2-phosphate = 2-C-methyl-D-erythritol 2,4-cyclic diphosphate + CMP. It functions in the pathway isoprenoid biosynthesis; isopentenyl diphosphate biosynthesis via DXP pathway; isopentenyl diphosphate from 1-deoxy-D-xylulose 5-phosphate: step 4/6. In terms of biological role, involved in the biosynthesis of isopentenyl diphosphate (IPP) and dimethylallyl diphosphate (DMAPP), two major building blocks of isoprenoid compounds. Catalyzes the conversion of 4-diphosphocytidyl-2-C-methyl-D-erythritol 2-phosphate (CDP-ME2P) to 2-C-methyl-D-erythritol 2,4-cyclodiphosphate (ME-CPP) with a corresponding release of cytidine 5-monophosphate (CMP). The sequence is that of 2-C-methyl-D-erythritol 2,4-cyclodiphosphate synthase from Cereibacter sphaeroides (strain ATCC 17029 / ATH 2.4.9) (Rhodobacter sphaeroides).